A 197-amino-acid chain; its full sequence is TATA-box-binding protein (197 aa).

2 tandem repeats follow at residues 10-86 and 101-177.

The protein belongs to the TBP family.

In terms of biological role, general factor that plays a role in the activation of archaeal genes transcribed by RNA polymerase. Binds specifically to the TATA box promoter element which lies close to the position of transcription initiation. The polypeptide is TATA-box-binding protein (Pyrobaculum neutrophilum (strain DSM 2338 / JCM 9278 / NBRC 100436 / V24Sta) (Thermoproteus neutrophilus)).